Here is a 294-residue protein sequence, read N- to C-terminus: Homeobox protein HD1 (294 aa).

Residues 197-217 (ELKLELKQGFKSRIEDVREEI) form the ELK domain. The segment at residues 218-281 (MRKRRAGKLP…NQRKRNWHNN (64 aa)) is a DNA-binding region (homeobox; TALE-type).

It belongs to the TALE/KNOX homeobox family. In terms of tissue distribution, in roots, stems and cotyledons of one-week old seedlings. In mature plants, in young leaves from first level below flowers as well as in flower buds and open flowers.

The protein localises to the nucleus. In terms of biological role, possible developmental regulator. The chain is Homeobox protein HD1 (HD1) from Brassica napus (Rape).